The chain runs to 276 residues: 2,3,4,5-tetrahydropyridine-2,6-dicarboxylate N-succinyltransferase (276 aa).

Substrate is bound by residues Arg-104 and Asp-141.

Belongs to the transferase hexapeptide repeat family. Homotrimer.

It localises to the cytoplasm. It catalyses the reaction (S)-2,3,4,5-tetrahydrodipicolinate + succinyl-CoA + H2O = (S)-2-succinylamino-6-oxoheptanedioate + CoA. It participates in amino-acid biosynthesis; L-lysine biosynthesis via DAP pathway; LL-2,6-diaminopimelate from (S)-tetrahydrodipicolinate (succinylase route): step 1/3. The polypeptide is 2,3,4,5-tetrahydropyridine-2,6-dicarboxylate N-succinyltransferase (Pseudoalteromonas translucida (strain TAC 125)).